Reading from the N-terminus, the 509-residue chain is Bifunctional purine biosynthesis protein PurH (509 aa).

The MGS-like domain maps to 1-144; sequence MKRALISVSD…KNYAAVTVVV (144 aa).

It belongs to the PurH family.

It carries out the reaction (6R)-10-formyltetrahydrofolate + 5-amino-1-(5-phospho-beta-D-ribosyl)imidazole-4-carboxamide = 5-formamido-1-(5-phospho-D-ribosyl)imidazole-4-carboxamide + (6S)-5,6,7,8-tetrahydrofolate. The catalysed reaction is IMP + H2O = 5-formamido-1-(5-phospho-D-ribosyl)imidazole-4-carboxamide. It participates in purine metabolism; IMP biosynthesis via de novo pathway; 5-formamido-1-(5-phospho-D-ribosyl)imidazole-4-carboxamide from 5-amino-1-(5-phospho-D-ribosyl)imidazole-4-carboxamide (10-formyl THF route): step 1/1. Its pathway is purine metabolism; IMP biosynthesis via de novo pathway; IMP from 5-formamido-1-(5-phospho-D-ribosyl)imidazole-4-carboxamide: step 1/1. This is Bifunctional purine biosynthesis protein PurH from Listeria monocytogenes serotype 4b (strain CLIP80459).